Here is a 554-residue protein sequence, read N- to C-terminus: Glucose-6-phosphate isomerase (554 aa).

Ser-2 is modified (N-acetylserine). A Phosphothreonine modification is found at Thr-53. Residues Gly-168–Ser-169, Ser-218–Thr-223, Gln-363, Glu-367, His-398, and Lys-520 each bind D-glucose 6-phosphate. Thr-220 carries the post-translational modification Phosphothreonine. Glu-367 acts as the Proton donor in catalysis. Active-site residues include His-398 and Lys-520.

This sequence belongs to the GPI family. In terms of assembly, homodimer.

It localises to the cytoplasm. The protein localises to the cytosol. It carries out the reaction alpha-D-glucose 6-phosphate = beta-D-fructose 6-phosphate. It participates in carbohydrate degradation; glycolysis; D-glyceraldehyde 3-phosphate and glycerone phosphate from D-glucose: step 2/4. Strongly inhibited by the polyol (sugar alcohol) phosphate D-glucitol 6-phosphate (D-sorbitol 6-phosphate). Also inhibited by the polyol (sugar alcohol) phosphate D-ribitol 5-phosphate. In the cytoplasm, catalyzes the conversion of glucose-6-phosphate to fructose-6-phosphate, the second step in glycolysis, and the reverse reaction during gluconeogenesis. This chain is Glucose-6-phosphate isomerase (PGI1), found in Saccharomyces cerevisiae (strain ATCC 204508 / S288c) (Baker's yeast).